The primary structure comprises 709 residues: Ribosomal RNA large subunit methyltransferase K/L (709 aa).

The region spanning 43–154 (LAYRITLWTR…NGVITIAMNF (112 aa)) is the THUMP domain.

This sequence belongs to the methyltransferase superfamily. RlmKL family.

It is found in the cytoplasm. It catalyses the reaction guanosine(2445) in 23S rRNA + S-adenosyl-L-methionine = N(2)-methylguanosine(2445) in 23S rRNA + S-adenosyl-L-homocysteine + H(+). The catalysed reaction is guanosine(2069) in 23S rRNA + S-adenosyl-L-methionine = N(2)-methylguanosine(2069) in 23S rRNA + S-adenosyl-L-homocysteine + H(+). Its function is as follows. Specifically methylates the guanine in position 2445 (m2G2445) and the guanine in position 2069 (m7G2069) of 23S rRNA. This is Ribosomal RNA large subunit methyltransferase K/L from Shewanella baltica (strain OS155 / ATCC BAA-1091).